The sequence spans 1360 residues: Activating molecule in BECN1-regulated autophagy protein 1B (1360 aa).

WD repeat units lie at residues 50–89, 92–132, and 134–174; these read DNPR…CLHS, GHRR…ESWF, and ESNV…AVVK. The segment covering 249-258 has biased composition (polar residues); that stretch reads RSSGAQANDQ. 7 disordered regions span residues 249 to 277, 315 to 364, 412 to 490, 514 to 573, 587 to 616, 664 to 688, and 754 to 796; these read RSSG…FQYP, PTGL…NSAH, GVET…QRNN, ELER…RCRS, WERS…EDPG, PTVS…NPDE, and TLSN…MPRN. The segment covering 319–333 has biased composition (low complexity); sequence QPSDSTQPQTQSGPS. Polar residues predominate over residues 350–361; the sequence is AFSSVFSGTAGN. A compositionally biased stretch (low complexity) spans 428-437; sequence SSSSMDLLSL. Polar residues-rich tracts occupy residues 443–454 and 473–490; these read GSSSSPIYTSAT and DGTS…QRNN. Residues 590-607 show a composition bias toward low complexity; that stretch reads SGQTSSSSSSQEGPSWPL. Residues 754 to 768 show a composition bias toward polar residues; that stretch reads TLSNSQADSQSNNPS. Acidic residues predominate over residues 775–784; the sequence is SDGDYEDIEE. 2 consecutive short sequence motifs (TQT motif) follow at residues 1109–1111 and 1121–1123; these read TQT. 2 disordered regions span residues 1120 to 1142 and 1241 to 1360; these read ETQT…TSRH and SQTS…LYGR. Polar residues-rich tracts occupy residues 1129 to 1142 and 1241 to 1252; these read SAST…TSRH and SQTSVRTAQGGN. Residues 1278 to 1288 show a composition bias toward low complexity; the sequence is APGPSGSSGAP. Positions 1311-1321 are enriched in basic and acidic residues; that stretch reads FGDRQPDDVQR. Residues 1329–1347 are compositionally biased toward low complexity; that stretch reads NMSNHSNNNNNDHSNSYSE. The segment covering 1348–1360 has biased composition (basic and acidic residues); that stretch reads SRSRDYPDDLYGR.

This sequence belongs to the WD repeat AMBRA1 family. As to quaternary structure, component of the DCX(AMBRA1) E3 ubiquitin ligase complex.

Its subcellular location is the endoplasmic reticulum. The protein localises to the cytoplasm. It localises to the cytoskeleton. It is found in the cytoplasmic vesicle. The protein resides in the autophagosome. Its subcellular location is the mitochondrion. The protein localises to the cytosol. It localises to the nucleus. It is found in the cell junction. The protein resides in the focal adhesion. It participates in protein modification; protein ubiquitination. Functionally, substrate-recognition component of a DCX (DDB1-CUL4-X-box) E3 ubiquitin-protein ligase complex involved in cell cycle control and autophagy. The DCX(AMBRA1) complex specifically mediates the polyubiquitination of target proteins. Acts as an upstream master regulator of the transition from G1 to S cell phase: ambra1b specifically recognizes and binds phosphorylated cyclin-D (ccnd1, ccnd2 and ccnd3), leading to cyclin-D ubiquitination by the DCX(AMBRA1) complex and subsequent degradation. Acts as a regulator of Cul5-RING (CRL5) E3 ubiquitin-protein ligase complexes by mediating ubiquitination and degradation of Elongin-C (eloc) component of CRL5 complexes. Acts as a key regulator of autophagy by modulating the BECN1-PIK3C3 complex: controls protein turnover during neuronal development, and regulates normal cell survival and proliferation. In normal conditions, ambra1b is tethered to the cytoskeleton via interaction with dyneins light chains. Upon autophagy induction, ambra1b is released from the cytoskeletal docking site to induce autophagosome nucleation by mediating ubiquitination of proteins involved in autophagy. Also acts as an activator of mitophagy. Required for skeletal muscle development. The protein is Activating molecule in BECN1-regulated autophagy protein 1B of Danio rerio (Zebrafish).